The following is an 801-amino-acid chain: Phenylalanine--tRNA ligase beta subunit (801 aa).

A tRNA-binding domain is found at 39 to 147 (GGGLDQVVVA…SDLPLGVPLF (109 aa)). Residues 401–477 (VSHRTIRFRV…RLNGYDRIET (77 aa)) enclose the B5 domain. Asp-455, Asp-461, Glu-464, and Glu-465 together coordinate Mg(2+). The region spanning 708-801 (SRFPDTFRDI…LVAKLGATIR (94 aa)) is the FDX-ACB domain.

This sequence belongs to the phenylalanyl-tRNA synthetase beta subunit family. Type 1 subfamily. Tetramer of two alpha and two beta subunits. Requires Mg(2+) as cofactor.

Its subcellular location is the cytoplasm. The catalysed reaction is tRNA(Phe) + L-phenylalanine + ATP = L-phenylalanyl-tRNA(Phe) + AMP + diphosphate + H(+). This chain is Phenylalanine--tRNA ligase beta subunit, found in Geobacter sulfurreducens (strain ATCC 51573 / DSM 12127 / PCA).